Reading from the N-terminus, the 1218-residue chain is Coatomer subunit alpha-2 (1218 aa).

WD repeat units lie at residues 7-48, 49-88, 91-132, 133-172, 202-241, 246-285, 288-326, and 363-404; these read TKSN…DRFD, EHDG…CLFT, GHLD…AVLT, GHNH…KKSV, GHDR…AWEV, GHMN…GIQT, REHD…PAFS, and SLNQ…AGRA. Residues 855–876 are disordered; that stretch reads MANGGDGFDAEEGEANEEDGEE. Over residues 862–876 the composition is skewed to acidic residues; it reads FDAEEGEANEEDGEE.

Oligomeric complex that consists of at least the alpha, beta, beta', gamma, delta, epsilon and zeta subunits.

The protein localises to the cytoplasm. Its subcellular location is the golgi apparatus membrane. It is found in the cytoplasmic vesicle. It localises to the COPI-coated vesicle membrane. Functionally, the coatomer is a cytosolic protein complex that binds to dilysine motifs and reversibly associates with Golgi non-clathrin-coated vesicles, which further mediate biosynthetic protein transport from the ER, via the Golgi up to the trans Golgi network. Coatomer complex is required for budding from Golgi membranes, and is essential for the retrograde Golgi-to-ER transport of dilysine-tagged proteins. The polypeptide is Coatomer subunit alpha-2 (Oryza sativa subsp. japonica (Rice)).